The sequence spans 549 residues: Glucose-6-phosphate isomerase (549 aa).

E353 serves as the catalytic Proton donor. Residues H384 and K513 contribute to the active site.

It belongs to the GPI family.

It is found in the cytoplasm. It catalyses the reaction alpha-D-glucose 6-phosphate = beta-D-fructose 6-phosphate. It functions in the pathway carbohydrate biosynthesis; gluconeogenesis. It participates in carbohydrate degradation; glycolysis; D-glyceraldehyde 3-phosphate and glycerone phosphate from D-glucose: step 2/4. Catalyzes the reversible isomerization of glucose-6-phosphate to fructose-6-phosphate. The polypeptide is Glucose-6-phosphate isomerase (Bartonella bacilliformis (strain ATCC 35685 / KC583 / Herrer 020/F12,63)).